A 501-amino-acid chain; its full sequence is Probable cytosol aminopeptidase (501 aa).

Mn(2+) contacts are provided by K270 and D275. K282 is an active-site residue. Positions 293, 352, and 354 each coordinate Mn(2+). R356 is a catalytic residue.

It belongs to the peptidase M17 family. Mn(2+) is required as a cofactor.

It localises to the cytoplasm. It catalyses the reaction Release of an N-terminal amino acid, Xaa-|-Yaa-, in which Xaa is preferably Leu, but may be other amino acids including Pro although not Arg or Lys, and Yaa may be Pro. Amino acid amides and methyl esters are also readily hydrolyzed, but rates on arylamides are exceedingly low.. The catalysed reaction is Release of an N-terminal amino acid, preferentially leucine, but not glutamic or aspartic acids.. Functionally, presumably involved in the processing and regular turnover of intracellular proteins. Catalyzes the removal of unsubstituted N-terminal amino acids from various peptides. In Wigglesworthia glossinidia brevipalpis, this protein is Probable cytosol aminopeptidase.